Here is a 625-residue protein sequence, read N- to C-terminus: Chromatin structure-remodeling complex subunit RSC4 (625 aa).

The segment at 1-35 (MVVKKRKLATEAGGSDERPKYLPGKHPKNQEKTPH) is disordered. Bromo domains lie at 53–158 (WHIP…VLKA) and 181–292 (KLVD…IQKE). Phosphoserine occurs at positions 199 and 545. The segment covering 536–552 (RTSNVNSNLSQPQQQEN) has biased composition (polar residues). Residues 536–555 (RTSNVNSNLSQPQQQENDVI) form a disordered region.

As to quaternary structure, component of the two forms of the RSC complex composed of at least either RSC1 or RSC2, and ARP7, ARP9, LDB7, NPL6, RSC3, RSC30, RSC4, RSC58, RSC6, RSC8, RSC9, SFH1, STH1, HTL1 and probably RTT102. The complexes interact with histone and histone variant components of centromeric chromatin.

It is found in the nucleus. In terms of biological role, component of the chromatin structure remodeling complex (RSC), which is involved in transcription regulation and nucleosome positioning. RSC is responsible for the transfer of a histone octamer from a nucleosome core particle to naked DNA. The reaction requires ATP and involves an activated RSC-nucleosome intermediate. Remodeling reaction also involves DNA translocation, DNA twist and conformational change. As a reconfigurer of centromeric and flanking nucleosomes, RSC complex is required both for proper kinetochore function in chromosome segregation and, via a PKC1-dependent signaling pathway, for organization of the cellular cytoskeleton. This chain is Chromatin structure-remodeling complex subunit RSC4 (RSC4), found in Saccharomyces cerevisiae (strain ATCC 204508 / S288c) (Baker's yeast).